The primary structure comprises 709 residues: Ral guanine nucleotide dissociation stimulator-like 3 (709 aa).

Residues 26-55 (VYSVSLRRQRSQRSTPERSGEGQTPIPATD) form a disordered region. Residues 64 to 201 (KVRALRAARL…LLEDFLKEAK (138 aa)) enclose the N-terminal Ras-GEF domain. Disordered regions lie at residues 203 to 225 (EQTEEEKRLAWSGPPRIAQTPGS), 395 to 416 (SQEETTEDDDCPSGSLPSKLPP), and 502 to 604 (PPAA…SRVP). The region spanning 248–503 (SVDDVAEQLT…YRVSRVIEPP (256 aa)) is the Ras-GEF domain. 2 stretches are compositionally biased toward low complexity: residues 502–511 (PPAASCPSSP) and 533–551 (SSPGGSPGDPSSPTSSVSP). Phosphoserine occurs at positions 506 and 510. The span at 552-576 (GSPPSSPRNREPPPPGSPPASPGPQ) shows a compositional bias: pro residues. Ser-553, Ser-568, Ser-572, Ser-577, and Ser-600 each carry phosphoserine. Positions 611 to 706 (SEARVIRVSI…KEGTGHTLSA (96 aa)) are interaction with HRAS, MRAS and RIT1. Residues 612–699 (EARVIRVSIN…GDFLLRRKEG (88 aa)) form the Ras-associating domain.

In terms of assembly, interacts with GTP-bound forms of RIT1, HRAS and MRAS. In terms of tissue distribution, widely expressed. Expressed at high levels in the liver and kidney.

In terms of biological role, guanine nucleotide exchange factor (GEF) for Ral-A. Potential effector of GTPase HRas and Ras-related protein M-Ras. Negatively regulates Elk-1-dependent gene induction downstream of HRas and MEKK1. The protein is Ral guanine nucleotide dissociation stimulator-like 3 (Rgl3) of Mus musculus (Mouse).